The chain runs to 298 residues: Replication protein A 32 kDa subunit B (298 aa).

A DNA-binding region (OB) is located at residues 89–163; it reads VRLVGRMLNK…QVVAYSVRRI (75 aa).

The protein belongs to the replication factor A protein 2 family. As to quaternary structure, heterotrimer of RPA1, RPA2 and RPA3 (canonical replication protein A complex). Interacts with RPA1A and RPA3. In terms of processing, phosphorylated in a cell-cycle-dependent manner (from the S phase until mitosis). In response to DNA damage, recruited to DNA-repair nuclear foci, as a hypophosphorylated form.

Its subcellular location is the nucleus. Component of the replication protein A complex (RPA) required for DNA recombination, repair and replication. The activity of RPA is mediated by single-stranded DNA binding and protein interactions. The chain is Replication protein A 32 kDa subunit B (RPA2B) from Oryza sativa subsp. japonica (Rice).